The following is a 395-amino-acid chain: Elongation factor Tu (395 aa).

The 195-residue stretch at 10–204 (KSHVNIGTIG…AVDEYIPTPE (195 aa)) folds into the tr-type G domain. The tract at residues 19 to 26 (GHVDHGKT) is G1. Position 19–26 (19–26 (GHVDHGKT)) interacts with GTP. Position 26 (T26) interacts with Mg(2+). The tract at residues 60 to 64 (GITIN) is G2. Residues 81-84 (DCPG) are G3. GTP-binding positions include 81–85 (DCPGH) and 136–139 (NKMD). The segment at 136–139 (NKMD) is G4. The segment at 174-176 (SAL) is G5.

The protein belongs to the TRAFAC class translation factor GTPase superfamily. Classic translation factor GTPase family. EF-Tu/EF-1A subfamily. In terms of assembly, monomer.

It is found in the cytoplasm. It catalyses the reaction GTP + H2O = GDP + phosphate + H(+). In terms of biological role, GTP hydrolase that promotes the GTP-dependent binding of aminoacyl-tRNA to the A-site of ribosomes during protein biosynthesis. The chain is Elongation factor Tu from Enterococcus faecalis (strain ATCC 700802 / V583).